A 427-amino-acid polypeptide reads, in one-letter code: WD repeat and SOCS box-containing protein 1 (427 aa).

WD repeat units lie at residues 129-170 (SRSI…LLLN), 173-213 (DHTD…NMVK), 217-256 (GHPNRVYSSAFSPDSSVLCSVGASKAVLLWNMDKYTLIRK), 259-298 (GHHNDVVSCEFSPDGALLATASYDTRVIVWDHQRGSILLE), and 314-353 (ANDRWVRSVSFCADGRHIASVSDDRLVRFWSIEERAPQAV). One can recognise an SOCS box domain in the interval 379 to 427 (SVHFWECPRSIASLQHLCRMALRRVKTTQQVEALPVPMPLRDFLTYRVV).

Component of a probable ECS E3 ubiquitin-protein ligase complex that contains the Elongin BC complex.

It functions in the pathway protein modification; protein ubiquitination. In terms of biological role, probable substrate-recognition component of a SCF-like ECS (Elongin-Cullin-SOCS-box protein) E3 ubiquitin-protein ligase complex which mediates the ubiquitination and subsequent proteasomal degradation of target proteins. This Takifugu rubripes (Japanese pufferfish) protein is WD repeat and SOCS box-containing protein 1 (wsb1).